The sequence spans 332 residues: UPF0194 membrane protein YbhG (332 aa).

A signal peptide spans 1–16 (MMKKPVVIGLAVVVLA). The stretch at 141–210 (RTISANDLEN…NLQDSTLIAP (70 aa)) forms a coiled coil.

This sequence belongs to the UPF0194 family.

The protein localises to the periplasm. This Shigella flexneri protein is UPF0194 membrane protein YbhG (ybhG).